Here is a 64-residue protein sequence, read N- to C-terminus: Large ribosomal subunit protein bL35 (64 aa).

This sequence belongs to the bacterial ribosomal protein bL35 family.

The chain is Large ribosomal subunit protein bL35 from Vibrio vulnificus (strain CMCP6).